Here is a 326-residue protein sequence, read N- to C-terminus: H-2 class I histocompatibility antigen, Q8 alpha chain (326 aa).

An N-terminal signal peptide occupies residues 1-21 (MALTMLLLLVAAALTLIETRA). An alpha-1 region spans residues 22-111 (GPHSLRYFHT…AQRYYNQSKG (90 aa)). The Extracellular segment spans residues 22–305 (GPHSLRYFHT…EPPPSTVSNM (284 aa)). An N-linked (GlcNAc...) asparagine glycan is attached at N107. An alpha-2 region spans residues 112–203 (GSHTLQWMYG…QLRKETLLCT (92 aa)). Cystine bridges form between C122–C185 and C224–C280. The segment at 204–295 (DPPKAHVTHH…GLPEPLTLRW (92 aa)) is alpha-3. The Ig-like C1-type domain occupies 206 to 294 (PKAHVTHHPR…EGLPEPLTLR (89 aa)). Residue N277 is glycosylated (N-linked (GlcNAc...) asparagine). Positions 296–305 (EPPPSTVSNM) are connecting peptide. Residues 306–326 (ANVAILVVLVAWPSLELWWIL) traverse the membrane as a helical segment.

It belongs to the MHC class I family. As to quaternary structure, heterodimer of an alpha chain and a beta chain (beta-2-microglobulin).

It is found in the membrane. In terms of biological role, involved in the presentation of foreign antigens to the immune system. This chain is H-2 class I histocompatibility antigen, Q8 alpha chain (H2-Q8), found in Mus musculus (Mouse).